A 162-amino-acid polypeptide reads, in one-letter code: 2-C-methyl-D-erythritol 2,4-cyclodiphosphate synthase (162 aa).

Aspartate 10 and histidine 12 together coordinate a divalent metal cation. Residues 10 to 12 (DVH) and 36 to 37 (HS) each bind 4-CDP-2-C-methyl-D-erythritol 2-phosphate. Position 44 (histidine 44) interacts with a divalent metal cation. 4-CDP-2-C-methyl-D-erythritol 2-phosphate is bound by residues 58–60 (DIG), 63–67 (FPDTD), 102–108 (AQAPKMA), 134–137 (TTTE), phenylalanine 141, and arginine 144.

This sequence belongs to the IspF family. As to quaternary structure, homotrimer. The cofactor is a divalent metal cation.

The catalysed reaction is 4-CDP-2-C-methyl-D-erythritol 2-phosphate = 2-C-methyl-D-erythritol 2,4-cyclic diphosphate + CMP. It functions in the pathway isoprenoid biosynthesis; isopentenyl diphosphate biosynthesis via DXP pathway; isopentenyl diphosphate from 1-deoxy-D-xylulose 5-phosphate: step 4/6. Involved in the biosynthesis of isopentenyl diphosphate (IPP) and dimethylallyl diphosphate (DMAPP), two major building blocks of isoprenoid compounds. Catalyzes the conversion of 4-diphosphocytidyl-2-C-methyl-D-erythritol 2-phosphate (CDP-ME2P) to 2-C-methyl-D-erythritol 2,4-cyclodiphosphate (ME-CPP) with a corresponding release of cytidine 5-monophosphate (CMP). In Pseudoalteromonas atlantica (strain T6c / ATCC BAA-1087), this protein is 2-C-methyl-D-erythritol 2,4-cyclodiphosphate synthase.